We begin with the raw amino-acid sequence, 333 residues long: Foldase protein PrsA (333 aa).

The N-terminal stretch at 1-21 (MKKRTIATGLVTLLSIVTLAA) is a signal peptide. Cysteine 22 is lipidated: N-palmitoyl cysteine. Cysteine 22 carries S-diacylglycerol cysteine lipidation. The 94-residue stretch at 144 to 237 (KPEVTAQVIQ…PVYYIVKITK (94 aa)) folds into the PpiC domain. Residues 296 to 333 (AASGSGSSGSTTTTTAASSAATTAADDQTTAAETTAAE) form a disordered region.

The protein belongs to the PrsA family.

The protein localises to the cell membrane. The catalysed reaction is [protein]-peptidylproline (omega=180) = [protein]-peptidylproline (omega=0). Its function is as follows. Plays a major role in protein secretion by helping the post-translocational extracellular folding of several secreted proteins. The polypeptide is Foldase protein PrsA (Streptococcus mutans serotype c (strain ATCC 700610 / UA159)).